An 828-amino-acid polypeptide reads, in one-letter code: Glycerol-3-phosphate acyltransferase 1, mitochondrial (828 aa).

Residues 1–87 are Cytoplasmic-facing; that stretch reads MEESSVTIGT…FFNPSIPSLG (87 aa). The segment at 80 to 120 is important for mitochondrial localization; the sequence is NPSIPSLGLRNVIYINETHTRHRGWLARRLSYILFVQERDV. The stretch at 88–118 is an intramembrane region; it reads LRNVIYINETHTRHRGWLARRLSYILFVQER. Residues 119–828 are Cytoplasmic-facing; sequence DVHKGMFATS…LEYILSFVVL (710 aa). Positions 230–235 match the HXXXXD motif motif; it reads HRSHID. CoA contacts are provided by arginine 278, arginine 279, lysine 288, arginine 293, and arginine 328. Serine 380 carries the post-translational modification Phosphoserine. A CoA-binding site is contributed by arginine 462. Serine 688 and serine 695 each carry phosphoserine. An N6-acetyllysine mark is found at lysine 780 and lysine 784.

It belongs to the GPAT/DAPAT family.

It is found in the mitochondrion outer membrane. The catalysed reaction is sn-glycerol 3-phosphate + an acyl-CoA = a 1-acyl-sn-glycero-3-phosphate + CoA. The enzyme catalyses sn-glycerol 3-phosphate + hexadecanoyl-CoA = 1-hexadecanoyl-sn-glycero-3-phosphate + CoA. It carries out the reaction (9Z,12Z)-octadecadienoyl-CoA + sn-glycerol 3-phosphate = 1-(9Z,12Z)-octadecadienoyl-sn-glycero-3-phosphate + CoA. It catalyses the reaction sn-glycerol 3-phosphate + (9Z)-octadecenoyl-CoA = 1-(9Z-octadecenoyl)-sn-glycero-3-phosphate + CoA. The catalysed reaction is sn-glycerol 3-phosphate + octadecanoyl-CoA = 1-octadecanoyl-sn-glycero-3-phosphate + CoA. The enzyme catalyses dodecanoyl-CoA + sn-glycerol 3-phosphate = 1-dodecanoyl-sn-glycerol 3-phosphate + CoA. It carries out the reaction 1-acyl-sn-glycero-3-phospho-(1'-sn-glycerol) + an acyl-CoA = a 1,2-diacyl-sn-glycero-3-phospho-(1'-sn-glycerol) + CoA. It participates in phospholipid metabolism; CDP-diacylglycerol biosynthesis; CDP-diacylglycerol from sn-glycerol 3-phosphate: step 1/3. In terms of biological role, mitochondrial membrane protein that catalyzes the essential first step of biosynthesis of glycerolipids such as triglycerides, phosphatidic acids and lysophosphatidic acids. Esterifies acyl-group from acyl-coenzyme A (acyl-CoA) to the sn-1 position of glycerol-3-phosphate, to produce lysophosphatidic acid. Has a narrow hydrophobic binding cleft that selects for a linear acyl chain. Catalytic activity is higher for substrates with a 16-carbon acyl chain. This is Glycerol-3-phosphate acyltransferase 1, mitochondrial from Rattus norvegicus (Rat).